A 297-amino-acid polypeptide reads, in one-letter code: Urease accessory protein UreD (297 aa).

Belongs to the UreD family. As to quaternary structure, ureD, UreF and UreG form a complex that acts as a GTP-hydrolysis-dependent molecular chaperone, activating the urease apoprotein by helping to assemble the nickel containing metallocenter of UreC. The UreE protein probably delivers the nickel.

The protein localises to the cytoplasm. Functionally, required for maturation of urease via the functional incorporation of the urease nickel metallocenter. The sequence is that of Urease accessory protein UreD from Anaeromyxobacter sp. (strain Fw109-5).